The following is a 156-amino-acid chain: Small ribosomal subunit protein uS7 (156 aa).

It belongs to the universal ribosomal protein uS7 family. In terms of assembly, part of the 30S ribosomal subunit. Contacts proteins S9 and S11.

Functionally, one of the primary rRNA binding proteins, it binds directly to 16S rRNA where it nucleates assembly of the head domain of the 30S subunit. Is located at the subunit interface close to the decoding center, probably blocks exit of the E-site tRNA. The protein is Small ribosomal subunit protein uS7 of Halalkalibacterium halodurans (strain ATCC BAA-125 / DSM 18197 / FERM 7344 / JCM 9153 / C-125) (Bacillus halodurans).